A 267-amino-acid chain; its full sequence is Tryptophan synthase alpha chain (267 aa).

Residues glutamate 43 and aspartate 54 each act as proton acceptor in the active site.

It belongs to the TrpA family. In terms of assembly, tetramer of two alpha and two beta chains.

It catalyses the reaction (1S,2R)-1-C-(indol-3-yl)glycerol 3-phosphate + L-serine = D-glyceraldehyde 3-phosphate + L-tryptophan + H2O. It participates in amino-acid biosynthesis; L-tryptophan biosynthesis; L-tryptophan from chorismate: step 5/5. Its function is as follows. The alpha subunit is responsible for the aldol cleavage of indoleglycerol phosphate to indole and glyceraldehyde 3-phosphate. This Bacillus pumilus (strain SAFR-032) protein is Tryptophan synthase alpha chain.